The primary structure comprises 465 residues: Dihydrolipoyl dehydrogenase (465 aa).

FAD is bound by residues 34 to 42, Lys-51, and Gly-114; that span reads EKREAGGTC. A disulfide bridge connects residues Cys-42 and Cys-47. NAD(+) is bound by residues 180-184, Glu-203, Val-237, and 264-267; these read GGGVI and SIGR. The FAD site is built by Asp-307 and Ala-315. Catalysis depends on His-439, which acts as the Proton acceptor.

The protein belongs to the class-I pyridine nucleotide-disulfide oxidoreductase family. FAD is required as a cofactor.

It is found in the cytoplasm. It carries out the reaction N(6)-[(R)-dihydrolipoyl]-L-lysyl-[protein] + NAD(+) = N(6)-[(R)-lipoyl]-L-lysyl-[protein] + NADH + H(+). The branched-chain alpha-keto dehydrogenase complex catalyzes the overall conversion of alpha-keto acids to acyl-CoA and CO(2). It contains multiple copies of 3 enzymatic components: branched-chain alpha-keto acid decarboxylase (E1), lipoamide acyltransferase (E2) and lipoamide dehydrogenase (E3). In Chlamydia trachomatis serovar D (strain ATCC VR-885 / DSM 19411 / UW-3/Cx), this protein is Dihydrolipoyl dehydrogenase (lpdA).